Reading from the N-terminus, the 150-residue chain is 3-hydroxyacyl-[acyl-carrier-protein] dehydratase FabZ (150 aa).

H54 is an active-site residue.

The protein belongs to the thioester dehydratase family. FabZ subfamily.

It localises to the cytoplasm. It catalyses the reaction a (3R)-hydroxyacyl-[ACP] = a (2E)-enoyl-[ACP] + H2O. Functionally, involved in unsaturated fatty acids biosynthesis. Catalyzes the dehydration of short chain beta-hydroxyacyl-ACPs and long chain saturated and unsaturated beta-hydroxyacyl-ACPs. This is 3-hydroxyacyl-[acyl-carrier-protein] dehydratase FabZ from Vibrio campbellii (strain ATCC BAA-1116).